We begin with the raw amino-acid sequence, 241 residues long: ATP synthase subunit a (241 aa).

Transmembrane regions (helical) follow at residues 30-50 (GQVF…VVVG), 91-111 (FIGT…LVPW), 128-148 (INTT…AGLS), 193-213 (LVVA…VMFL), and 214-234 (GLFT…YYIG).

This sequence belongs to the ATPase A chain family. As to quaternary structure, F-type ATPases have 2 components, CF(1) - the catalytic core - and CF(0) - the membrane proton channel. CF(1) has five subunits: alpha(3), beta(3), gamma(1), delta(1), epsilon(1). CF(0) has four main subunits: a, b, b' and c.

Its subcellular location is the cellular thylakoid membrane. Key component of the proton channel; it plays a direct role in the translocation of protons across the membrane. This chain is ATP synthase subunit a, found in Prochlorococcus marinus (strain MIT 9211).